Consider the following 198-residue polypeptide: Probable chorismate pyruvate-lyase (198 aa).

Residues R73, L111, and E172 each contribute to the substrate site.

The protein belongs to the UbiC family.

It localises to the cytoplasm. It carries out the reaction chorismate = 4-hydroxybenzoate + pyruvate. Its pathway is cofactor biosynthesis; ubiquinone biosynthesis. Removes the pyruvyl group from chorismate, with concomitant aromatization of the ring, to provide 4-hydroxybenzoate (4HB) for the ubiquinone pathway. The polypeptide is Probable chorismate pyruvate-lyase (Burkholderia lata (strain ATCC 17760 / DSM 23089 / LMG 22485 / NCIMB 9086 / R18194 / 383)).